The sequence spans 184 residues: Large ribosomal subunit protein uL22 (184 aa).

It belongs to the universal ribosomal protein uL22 family. Part of the 50S ribosomal subunit.

This protein binds specifically to 23S rRNA. It makes multiple contacts with different domains of the 23S rRNA in the assembled 50S subunit and ribosome. In terms of biological role, the globular domain of the protein is located near the polypeptide exit tunnel on the outside of the subunit, while an extended beta-hairpin is found that lines the wall of the exit tunnel in the center of the 70S ribosome. This chain is Large ribosomal subunit protein uL22, found in Pyrobaculum calidifontis (strain DSM 21063 / JCM 11548 / VA1).